Reading from the N-terminus, the 148-residue chain is Globin-3 (148 aa).

The Globin domain occupies 2-148 (TLTKHEQDIL…HVFPMMAAEI (147 aa)). Histidine 99 provides a ligand contact to heme.

This sequence belongs to the globin family. In terms of assembly, monomer.

Its function is as follows. Oxygen binding protein. The protein is Globin-3 of Paramphistomum epiclitum.